The sequence spans 530 residues: 3-oxo-5-alpha-steroid 4-dehydrogenase (530 aa).

An FAD-binding site is contributed by 33 to 62 (DVVVVGWGGAGASAAIEAREQGAEVLVIER). A helical membrane pass occupies residues 395–415 (AWQCLFGGLWAFQSMPALALM).

Belongs to the FAD-dependent oxidoreductase 2 family. The cofactor is FAD.

It localises to the membrane. It catalyses the reaction a 3-oxo-5alpha-steroid + A = a 3-oxo-Delta(4)-steroid + AH2. The enzyme catalyses 5alpha-androstan-3,17-dione + A = androst-4-ene-3,17-dione + AH2. It carries out the reaction 5alpha-androst-1-ene-3,17-dione + A = androsta-1,4-diene-3,17-dione + AH2. Its activity is regulated as follows. Inhibition occurs with substrate concentrations above 25 uM. Involved in the degradation of steroids having an A:B ring fusion in a trans configuration. Catalyzes the elimination of hydrogens located at positions 4 and 5 and the introduction of double bonds into ring A. The protein is 3-oxo-5-alpha-steroid 4-dehydrogenase of Comamonas testosteroni (Pseudomonas testosteroni).